Here is a 164-residue protein sequence, read N- to C-terminus: S-ribosylhomocysteine lyase (164 aa).

Positions 54, 58, and 128 each coordinate Fe cation.

It belongs to the LuxS family. As to quaternary structure, homodimer. It depends on Fe cation as a cofactor.

It carries out the reaction S-(5-deoxy-D-ribos-5-yl)-L-homocysteine = (S)-4,5-dihydroxypentane-2,3-dione + L-homocysteine. Its function is as follows. Involved in the synthesis of autoinducer 2 (AI-2) which is secreted by bacteria and is used to communicate both the cell density and the metabolic potential of the environment. The regulation of gene expression in response to changes in cell density is called quorum sensing. Catalyzes the transformation of S-ribosylhomocysteine (RHC) to homocysteine (HC) and 4,5-dihydroxy-2,3-pentadione (DPD). In Campylobacter jejuni subsp. jejuni serotype O:2 (strain ATCC 700819 / NCTC 11168), this protein is S-ribosylhomocysteine lyase.